We begin with the raw amino-acid sequence, 287 residues long: ATP synthase gamma chain (287 aa).

This sequence belongs to the ATPase gamma chain family. In terms of assembly, F-type ATPases have 2 components, CF(1) - the catalytic core - and CF(0) - the membrane proton channel. CF(1) has five subunits: alpha(3), beta(3), gamma(1), delta(1), epsilon(1). CF(0) has three main subunits: a, b and c.

The protein resides in the cell inner membrane. Functionally, produces ATP from ADP in the presence of a proton gradient across the membrane. The gamma chain is believed to be important in regulating ATPase activity and the flow of protons through the CF(0) complex. The chain is ATP synthase gamma chain from Edwardsiella ictaluri (strain 93-146).